The sequence spans 441 residues: Histidinol dehydrogenase homolog (441 aa).

A Zn(2+)-binding site is contributed by H266. Active-site proton acceptor residues include E334 and H335. A Zn(2+)-binding site is contributed by H427.

It belongs to the histidinol dehydrogenase family. Zn(2+) is required as a cofactor.

This Cereibacter sphaeroides (strain ATCC 17023 / DSM 158 / JCM 6121 / CCUG 31486 / LMG 2827 / NBRC 12203 / NCIMB 8253 / ATH 2.4.1.) (Rhodobacter sphaeroides) protein is Histidinol dehydrogenase homolog.